A 116-amino-acid polypeptide reads, in one-letter code: MYKQVIVVRGDLKLSRGKLAAQVAHASLGAFLRAKESGAPVEEWLREGQKKVVLKCKDKEELLELHELAKRRGLPSFLVRDAGLTELEPGTVTCLGIGPEREEEIDRVTGDLPLLR.

Belongs to the PTH2 family.

It localises to the cytoplasm. It carries out the reaction an N-acyl-L-alpha-aminoacyl-tRNA + H2O = an N-acyl-L-amino acid + a tRNA + H(+). Its function is as follows. The natural substrate for this enzyme may be peptidyl-tRNAs which drop off the ribosome during protein synthesis. The protein is Peptidyl-tRNA hydrolase of Methanopyrus kandleri (strain AV19 / DSM 6324 / JCM 9639 / NBRC 100938).